A 154-amino-acid polypeptide reads, in one-letter code: Transcriptional repressor NrdR (154 aa).

Residues 1–22 (MECPNCHKNASRVIDSRPSDEN) are disordered. Residues 3 to 34 (CPNCHKNASRVIDSRPSDENRAIRRRRECENC) fold into a zinc finger. The region spanning 49–139 (LLVVKNDGTR…IYRQFKDVSG (91 aa)) is the ATP-cone domain.

The protein belongs to the NrdR family. Requires Zn(2+) as cofactor.

Negatively regulates transcription of bacterial ribonucleotide reductase nrd genes and operons by binding to NrdR-boxes. This is Transcriptional repressor NrdR from Lactobacillus johnsonii (strain CNCM I-12250 / La1 / NCC 533).